We begin with the raw amino-acid sequence, 74 residues long: Defensin J1-2 (74 aa).

An N-terminal signal peptide occupies residues 1-27 (MAGFSKVIATIFLMMMLVFATGMVAEA). 4 disulfides stabilise this stretch: C30-C74, C41-C61, C47-C68, and C51-C70.

This sequence belongs to the DEFL family. In terms of assembly, monomer. In terms of tissue distribution, expressed in flowers and in young fruits.

The protein resides in the secreted. Plant defense peptide with antifungal activity against F.oxysporum and B.cinerea. This chain is Defensin J1-2, found in Capsicum annuum (Capsicum pepper).